Consider the following 185-residue polypeptide: Transcription factor bHLH109 (185 aa).

Residues 67–117 form the bHLH domain; sequence RSMEYRMMMEKKRRKEIKDKVDILQGLMPNHCTKPDLASKLENIIEYIKSL.

The protein belongs to the bHLH protein family. As to quaternary structure, homodimer.

Its subcellular location is the nucleus. Functionally, transcription factor involved in somatic embryogenesis. Acts as a positive regulator of somatic embryo formation. Acts as a positive regulator of ECP63 by targeting its promoter and inducing its expression. This chain is Transcription factor bHLH109 (BHLH109), found in Arabidopsis thaliana (Mouse-ear cress).